Here is a 389-residue protein sequence, read N- to C-terminus: Ecto-ADP-ribosyltransferase 3 (389 aa).

The first 26 residues, 1 to 26 (MKTGHFEIVTMLLATMILVDIFQVKA), serve as a signal peptide directing secretion. A disulfide bridge connects residues Cys-43 and Cys-256. The TR mART core domain occupies 64–251 (QQLDTVWENA…LILQSINKTC (188 aa)). 2 residues coordinate NAD(+): Tyr-101 and Arg-163. Asn-248 is a glycosylation site (N-linked (GlcNAc...) asparagine). Tandem repeats lie at residues 283–292 (GEKNQKLEDH), 293–302 (SEKNWKLEDH), and 303–312 (GEKNQKLEDH). The tract at residues 283-312 (GEKNQKLEDHSEKNWKLEDHGEKNQKLEDH) is 3 X 10 AA tandem repeats of [GS]-E-K-N-[QW]-K-L-E-D-H. A disordered region spans residues 325-362 (MKIPEPFPLPEDKSQGNINNPTPGPVPVPGPKSHPSAS). O-linked (GalNAc...) threonine glycosylation occurs at Thr-346. Residues 346–356 (TPGPVPVPGPK) are compositionally biased toward pro residues. A lipid anchor (GPI-anchor amidated serine) is attached at Ser-362. Residues 363-389 (SGKLLLPQFGMVIILISVSAINLFVAL) constitute a propeptide, removed in mature form.

It belongs to the Arg-specific ADP-ribosyltransferase family. Post-translationally, O-glycosylated with core 1 or possibly core 8 glycans. In terms of tissue distribution, testis specific.

It is found in the cell membrane. The enzyme catalyses L-arginyl-[protein] + NAD(+) = N(omega)-(ADP-D-ribosyl)-L-arginyl-[protein] + nicotinamide + H(+). The polypeptide is Ecto-ADP-ribosyltransferase 3 (ART3) (Homo sapiens (Human)).